The sequence spans 114 residues: uncharacterized protein (114 aa).

A helical transmembrane segment spans residues 13–30 (LYISAAGIASIYVVKTIV).

Its subcellular location is the mitochondrion outer membrane. This is an uncharacterized protein from Saccharomyces cerevisiae (strain ATCC 204508 / S288c) (Baker's yeast).